The primary structure comprises 615 residues: Pre-hexon-linking protein IIIa (615 aa).

Residues 1 to 92 (MDPGLKPSSS…DLLIRVHKYN (92 aa)) form a peripentonal hexon-tethering domain region. Residues 124–238 (SNQVILNDFL…FTNENTFTPD (115 aa)) are binding to hexon-linking protein. Ser-212 bears the Phosphoserine; by host mark. Residue Thr-262 is modified to Phosphothreonine; by host. The span at 400-409 (EREALEEAGP) shows a compositional bias: basic and acidic residues. 2 disordered regions span residues 400-473 (EREA…SVDS) and 528-615 (GERI…NGLK). Composition is skewed to low complexity over residues 419 to 430 (PSSSPQSSKIQS) and 451 to 460 (SVRSAPPSVS). Ser-451 carries the post-translational modification Phosphoserine; by host. Basic and acidic residues predominate over residues 539–548 (RAEIERRRIA). Low complexity predominate over residues 557 to 570 (PSLSSESSAPSLSS). A propeptide spanning residues 602-615 (GNPFDYLRPRNGLK) is cleaved from the precursor.

Belongs to the adenoviridae hexon-linking protein IIIa family. As to quaternary structure, interacts with hexon proteins; this interaction tethers the peripentonal hexons to hexons situated in the facet. Interacts with the penton protein (via N-terminus). Interacts with packaging protein 3; this interaction is required to promote correct genome packaging. Cleaved near the C-terminus by the viral protease during virion maturation to form the mature protein.

The protein localises to the virion. The protein resides in the host nucleus. Its function is as follows. Structural component of the virion that acts as a cement protein on the capsid exterior which mediates the interactions between the hexons, including the peripentonal hexons, and reaches all the way to the penton vertices. Two hexon linking proteins IIIa, one from each facet, stabilize the unique edge interface between a pair of facets. As the virus enters the host cell, hexon linking proteins IIIa are shed concomitant with virion acidification in the endosome. During virus assembly, seems to play a role in the serotype specificity of the packaging of viral DNA via its interaction with packaging protein 3. The sequence is that of Pre-hexon-linking protein IIIa from Snake adenovirus serotype 1 (SnAdV-1).